The chain runs to 129 residues: MAKDYSRTQRIGDQMQRELAQLIQREIKDPRLGLVTITGVEVSRDVAHAKVFITVMGQDDAGKIALNMEILNDAAGYLRMLLGKSMKLRSVPQLHFHYDESIRRGAELSALIERAVAEDGRRHGDETED.

It belongs to the RbfA family. In terms of assembly, monomer. Binds 30S ribosomal subunits, but not 50S ribosomal subunits or 70S ribosomes.

The protein localises to the cytoplasm. One of several proteins that assist in the late maturation steps of the functional core of the 30S ribosomal subunit. Associates with free 30S ribosomal subunits (but not with 30S subunits that are part of 70S ribosomes or polysomes). Required for efficient processing of 16S rRNA. May interact with the 5'-terminal helix region of 16S rRNA. This is Ribosome-binding factor A from Pseudomonas aeruginosa (strain UCBPP-PA14).